The following is a 183-amino-acid chain: Glutamyl-tRNA(Gln) amidotransferase subunit F, mitochondrial (183 aa).

A mitochondrion-targeting transit peptide spans 1 to 23; the sequence is MSRMLNQIPRLITRSFRTSSVGY.

It belongs to the GatF family. In terms of assembly, subunit of the heterotrimeric GatFAB amidotransferase (AdT) complex, composed of A, B and F subunits.

The protein localises to the mitochondrion inner membrane. It catalyses the reaction L-glutamyl-tRNA(Gln) + L-glutamine + ATP + H2O = L-glutaminyl-tRNA(Gln) + L-glutamate + ADP + phosphate + H(+). In terms of biological role, allows the formation of correctly charged Gln-tRNA(Gln) through the transamidation of misacylated Glu-tRNA(Gln) in the mitochondria. The reaction takes place in the presence of glutamine and ATP through an activated gamma-phospho-Glu-tRNA(Gln). Required for proper protein synthesis within the mitochondrion. This chain is Glutamyl-tRNA(Gln) amidotransferase subunit F, mitochondrial, found in Debaryomyces hansenii (strain ATCC 36239 / CBS 767 / BCRC 21394 / JCM 1990 / NBRC 0083 / IGC 2968) (Yeast).